Consider the following 413-residue polypeptide: Imidazolonepropionase (413 aa).

Residues His-77 and His-79 each contribute to the Fe(3+) site. Residues His-77 and His-79 each coordinate Zn(2+). 4-imidazolone-5-propanoate contacts are provided by Arg-86, Tyr-149, and His-182. Residue Tyr-149 coordinates N-formimidoyl-L-glutamate. His-247 lines the Fe(3+) pocket. His-247 serves as a coordination point for Zn(2+). Gln-250 is a binding site for 4-imidazolone-5-propanoate. Fe(3+) is bound at residue Asp-322. Asp-322 contacts Zn(2+). 2 residues coordinate N-formimidoyl-L-glutamate: Asn-324 and Gly-326. 4-imidazolone-5-propanoate is bound at residue Thr-327.

It belongs to the metallo-dependent hydrolases superfamily. HutI family. The cofactor is Zn(2+). Fe(3+) is required as a cofactor.

The protein resides in the cytoplasm. It catalyses the reaction 4-imidazolone-5-propanoate + H2O = N-formimidoyl-L-glutamate. It participates in amino-acid degradation; L-histidine degradation into L-glutamate; N-formimidoyl-L-glutamate from L-histidine: step 3/3. Catalyzes the hydrolytic cleavage of the carbon-nitrogen bond in imidazolone-5-propanoate to yield N-formimidoyl-L-glutamate. It is the third step in the universal histidine degradation pathway. The chain is Imidazolonepropionase from Chromobacterium violaceum (strain ATCC 12472 / DSM 30191 / JCM 1249 / CCUG 213 / NBRC 12614 / NCIMB 9131 / NCTC 9757 / MK).